Reading from the N-terminus, the 320-residue chain is Phospho-N-acetylmuramoyl-pentapeptide-transferase (320 aa).

10 helical membrane-spanning segments follow: residues Ile-7–Phe-27, Gly-50–Phe-70, Ile-77–Ile-97, Leu-113–Ser-133, Trp-148–Thr-168, Gly-173–Ser-193, Met-198–Asn-216, Val-221–Val-241, Val-247–Val-267, and Val-297–Gln-317.

Belongs to the glycosyltransferase 4 family. MraY subfamily. Mg(2+) serves as cofactor.

The protein localises to the cell membrane. The enzyme catalyses UDP-N-acetyl-alpha-D-muramoyl-L-alanyl-gamma-D-glutamyl-meso-2,6-diaminopimeloyl-D-alanyl-D-alanine + di-trans,octa-cis-undecaprenyl phosphate = di-trans,octa-cis-undecaprenyl diphospho-N-acetyl-alpha-D-muramoyl-L-alanyl-D-glutamyl-meso-2,6-diaminopimeloyl-D-alanyl-D-alanine + UMP. The protein operates within cell wall biogenesis; peptidoglycan biosynthesis. Catalyzes the initial step of the lipid cycle reactions in the biosynthesis of the cell wall peptidoglycan: transfers peptidoglycan precursor phospho-MurNAc-pentapeptide from UDP-MurNAc-pentapeptide onto the lipid carrier undecaprenyl phosphate, yielding undecaprenyl-pyrophosphoryl-MurNAc-pentapeptide, known as lipid I. This Caldicellulosiruptor bescii (strain ATCC BAA-1888 / DSM 6725 / KCTC 15123 / Z-1320) (Anaerocellum thermophilum) protein is Phospho-N-acetylmuramoyl-pentapeptide-transferase.